The following is a 90-amino-acid chain: DNA-binding protein HU-alpha (90 aa).

The protein belongs to the bacterial histone-like protein family. As to quaternary structure, heterodimer of an alpha and a beta chain.

Its function is as follows. Histone-like DNA-binding protein which is capable of wrapping DNA to stabilize it, and thus to prevent its denaturation under extreme environmental conditions. The sequence is that of DNA-binding protein HU-alpha (hupA) from Vibrio proteolyticus (Aeromonas proteolytica).